A 1335-amino-acid chain; its full sequence is Mediator of RNA polymerase II transcription subunit 15a (1335 aa).

Disordered regions lie at residues methionine 1 to proline 27, glycine 109 to threonine 172, glutamine 190 to proline 225, phenylalanine 241 to glutamine 389, isoleucine 401 to asparagine 448, leucine 496 to glycine 525, serine 567 to glycine 591, and histidine 683 to valine 815. Polar residues-rich tracts occupy residues threonine 110–proline 158, glutamine 190–glutamine 207, and phenylalanine 241–isoleucine 257. Over residues glutamine 258–leucine 270 the composition is skewed to low complexity. A compositionally biased stretch (polar residues) spans histidine 271–asparagine 299. Low complexity predominate over residues glutamine 300–serine 314. A compositionally biased stretch (polar residues) spans methionine 315–proline 328. The span at glutamine 329–glutamine 362 shows a compositional bias: low complexity. Polar residues predominate over residues alanine 363 to methionine 374. Residues isoleucine 401 to glutamine 436 show a composition bias toward low complexity. The segment covering alanine 437–asparagine 448 has biased composition (polar residues). Residues serine 498–glycine 525 show a composition bias toward low complexity. Positions serine 567 to alanine 588 are enriched in polar residues. Residues proline 688 to aspartate 712 show a composition bias toward low complexity. 3 stretches are compositionally biased toward polar residues: residues aspartate 716–methionine 728, alanine 735–serine 749, and alanine 756–valine 815. A coiled-coil region spans residues glutamine 834–aspartate 882. 2 disordered regions span residues lysine 947–leucine 986 and phenylalanine 1146–alanine 1165. A compositionally biased stretch (low complexity) spans serine 957–proline 973. Positions glycine 1148–serine 1160 are enriched in polar residues.

It belongs to the plant Mediator complex subunit 15 family. In terms of assembly, component of the Mediator complex.

The protein localises to the nucleus. Component of the Mediator complex, a coactivator involved in the regulated transcription of nearly all RNA polymerase II-dependent genes. Mediator functions as a bridge to convey information from gene-specific regulatory proteins to the basal RNA polymerase II transcription machinery. The Mediator complex, having a compact conformation in its free form, is recruited to promoters by direct interactions with regulatory proteins and serves for the assembly of a functional preinitiation complex with RNA polymerase II and the general transcription factors. This is Mediator of RNA polymerase II transcription subunit 15a (MED15A) from Arabidopsis thaliana (Mouse-ear cress).